The primary structure comprises 488 residues: Malonate-semialdehyde dehydrogenase (488 aa).

NAD(+) contacts are provided by A150, F152, K176, E179, R180, S229, and T251. C284 functions as the Nucleophile in the catalytic mechanism. E382 serves as a coordination point for NAD(+).

The protein belongs to the aldehyde dehydrogenase family. IolA subfamily. In terms of assembly, homotetramer.

It catalyses the reaction 3-oxopropanoate + NAD(+) + CoA + H2O = hydrogencarbonate + acetyl-CoA + NADH + H(+). The enzyme catalyses 2-methyl-3-oxopropanoate + NAD(+) + CoA + H2O = propanoyl-CoA + hydrogencarbonate + NADH + H(+). It participates in polyol metabolism; myo-inositol degradation into acetyl-CoA; acetyl-CoA from myo-inositol: step 7/7. Functionally, catalyzes the oxidation of malonate semialdehyde (MSA) and methylmalonate semialdehyde (MMSA) into acetyl-CoA and propanoyl-CoA, respectively. Is involved in a myo-inositol catabolic pathway. Bicarbonate, and not CO2, is the end-product of the enzymatic reaction. In Listeria innocua serovar 6a (strain ATCC BAA-680 / CLIP 11262), this protein is Malonate-semialdehyde dehydrogenase.